A 515-amino-acid chain; its full sequence is ADP,ATP carrier protein 1 (515 aa).

12 helical membrane-spanning segments follow: residues 24 to 44 (LKKV…YTVL), 62 to 82 (AIPF…MLIY), 93 to 113 (ALFY…PTVI), 124 to 144 (EFAD…VAIL), 149 to 169 (FAAF…LMFW), 184 to 204 (FYAL…RAIV), 226 to 246 (LLMA…WWIN), 286 to 306 (YILL…LIEV), 329 to 349 (FSFW…GNVI), 358 to 378 (ALVT…LVIF), 383 to 403 (SGLV…VGAI), and 465 to 485 (IGAM…IWLV).

Belongs to the ADP/ATP translocase tlc family.

Its subcellular location is the cell membrane. The chain is ADP,ATP carrier protein 1 (tlcA) from Chlamydia pneumoniae (Chlamydophila pneumoniae).